The following is a 231-amino-acid chain: PIAGSMVLAAILLKLGGYGIIRMMQILPTTKTDLFLPFIVLALWGAILANLTCLQQTDLKSLIAYSSISHMGLVVAAIIIQTPWGLSGAMALMIAHGFTSSALFCLANTTYERTHTRILILTRGFHNILPMATTWWLVTNLMNIAIPPSMNFTGELLIMSALFNWCPTTIIMLGLSMLITASYSLHMFLSTQMGPTMLNNQTEPMHSREHLLIALHLAPLLMISLKPELVI.

Transmembrane regions (helical) follow at residues 1–21, 34–54, 63–85, 89–111, 128–148, 156–176, and 211–231; these read PIAG…YGII, LFLP…LTCL, IAYS…TPWG, AMAL…NTTY, ILPM…AIPP, LLIM…LGLS, and LLIA…ELVI.

The protein belongs to the complex I subunit 4 family.

The protein localises to the mitochondrion membrane. It carries out the reaction a ubiquinone + NADH + 5 H(+)(in) = a ubiquinol + NAD(+) + 4 H(+)(out). Its function is as follows. Core subunit of the mitochondrial membrane respiratory chain NADH dehydrogenase (Complex I) that is believed to belong to the minimal assembly required for catalysis. Complex I functions in the transfer of electrons from NADH to the respiratory chain. The immediate electron acceptor for the enzyme is believed to be ubiquinone. The polypeptide is NADH-ubiquinone oxidoreductase chain 4 (MT-ND4) (Crotalus adamanteus (Eastern diamondback rattlesnake)).